The chain runs to 309 residues: Tagatose-6-phosphate kinase (309 aa).

This sequence belongs to the carbohydrate kinase PfkB family. LacC subfamily.

It carries out the reaction D-tagatofuranose 6-phosphate + ATP = D-tagatofuranose 1,6-bisphosphate + ADP + H(+). It functions in the pathway carbohydrate metabolism; D-tagatose 6-phosphate degradation; D-glyceraldehyde 3-phosphate and glycerone phosphate from D-tagatose 6-phosphate: step 1/2. The chain is Tagatose-6-phosphate kinase from Streptococcus pneumoniae (strain 70585).